The primary structure comprises 1085 residues: Phosphorylase b kinase regulatory subunit beta (1085 aa).

Phosphoserine is present on residues Ser10, Ser19, and Ser693. Calmodulin-binding regions lie at residues 760-787 and 912-943; these read RVYRRAGSKKLWSVVRRAASLLNKVVDS and SGRCWLNRRQIDGSLNRTPPEFYDRVWQILER. Residue Cys1082 is the site of S-farnesyl cysteine attachment.

The protein belongs to the phosphorylase b kinase regulatory chain family. In terms of assembly, hexadecamer of 4 heterotetramers, each composed of alpha, beta, gamma, and delta subunits. Alpha (PHKA1 or PHKA2) and beta (PHKB) are regulatory subunits, gamma (PHKG1 or PHKG2) is the catalytic subunit, and delta is calmodulin. In terms of processing, although the final Cys may be farnesylated, the terminal tripeptide is probably not removed, and the C-terminus is not methylated.

Its subcellular location is the cell membrane. Its pathway is glycan biosynthesis; glycogen metabolism. With respect to regulation, by phosphorylation of various serine residues. Its function is as follows. Phosphorylase b kinase catalyzes the phosphorylation of serine in certain substrates, including troponin I. The beta chain acts as a regulatory unit and modulates the activity of the holoenzyme in response to phosphorylation. This is Phosphorylase b kinase regulatory subunit beta (Phkb) from Mus musculus (Mouse).